A 970-amino-acid polypeptide reads, in one-letter code: Insulin-degrading enzyme-like 1, peroxisomal (970 aa).

H69 serves as a coordination point for Zn(2+). E72 serves as the catalytic Proton acceptor. H73 contacts Zn(2+). E143 is an active-site residue. Residue E150 participates in Zn(2+) binding.

It belongs to the peptidase M16 family. It depends on Zn(2+) as a cofactor.

Its subcellular location is the peroxisome. In terms of biological role, peptidase that might be involved in pathogen or wound response. Not required for peroxisome biogenesis, indole-3-butyric acid (IBA) metabolism, fatty acid beta-oxidation or degradation of glyoxylate cycle enzymes during seedling development. In Arabidopsis thaliana (Mouse-ear cress), this protein is Insulin-degrading enzyme-like 1, peroxisomal (PXM16).